Reading from the N-terminus, the 483-residue chain is Regulatory protein ViaA (483 aa).

The protein belongs to the ViaA family. In terms of assembly, homodimer. Interacts with RavA.

It is found in the cytoplasm. Its function is as follows. Component of the RavA-ViaA chaperone complex, which may act on the membrane to optimize the function of some of the respiratory chains. ViaA stimulates the ATPase activity of RavA. This is Regulatory protein ViaA from Escherichia coli O127:H6 (strain E2348/69 / EPEC).